We begin with the raw amino-acid sequence, 346 residues long: Iron uptake protein A2 (346 aa).

Residues 1–31 constitute a signal peptide (tat-type signal); the sequence is MTTKISRRTFFVGGTALTALVVANLPRRASA. Fe cation contacts are provided by histidine 43, tyrosine 44, tyrosine 169, tyrosine 225, and tyrosine 226.

Belongs to the bacterial solute-binding protein 1 family. In terms of processing, predicted to be exported by the Tat system. The position of the signal peptide cleavage has not been experimentally proven.

Its subcellular location is the cellular thylakoid membrane. It localises to the periplasm. Probably part of a periplasmic ABC transporter complex futA1A2BC (TC 3.A.1.10.2) involved in Fe(3+) ion import (ferric iron). This protein and futA1 (slr1295) are subunit proteins that have redundant or overlapping substrate-binding functions. The differing subcellular locations of futA1 (predominantly thylakoid lumen) and futA2 (predominantly periplasmic) suggest they may fulfill different roles. In terms of biological role, plays an important role in protecting the acceptor side of photosystem II (PSII) against oxidative damage, especially under iron-limiting growth conditions. Functionally, plays an undefined role in copper supply to thylakoid proteins. This chain is Iron uptake protein A2 (futA2), found in Synechocystis sp. (strain ATCC 27184 / PCC 6803 / Kazusa).